The sequence spans 392 residues: Phosphoglycerate kinase (392 aa).

Substrate is bound by residues 19 to 21, R34, 57 to 60, R116, and R149; these read DYN and HLGR. ATP contacts are provided by residues K199, E321, and 347-350; that span reads GGDS.

Belongs to the phosphoglycerate kinase family. In terms of assembly, monomer.

Its subcellular location is the cytoplasm. The enzyme catalyses (2R)-3-phosphoglycerate + ATP = (2R)-3-phospho-glyceroyl phosphate + ADP. It participates in carbohydrate degradation; glycolysis; pyruvate from D-glyceraldehyde 3-phosphate: step 2/5. In Thermomicrobium roseum (strain ATCC 27502 / DSM 5159 / P-2), this protein is Phosphoglycerate kinase.